The sequence spans 405 residues: Tryptophan synthase beta chain (405 aa).

At Lys-95 the chain carries N6-(pyridoxal phosphate)lysine.

It belongs to the TrpB family. As to quaternary structure, tetramer of two alpha and two beta chains. The cofactor is pyridoxal 5'-phosphate.

The enzyme catalyses (1S,2R)-1-C-(indol-3-yl)glycerol 3-phosphate + L-serine = D-glyceraldehyde 3-phosphate + L-tryptophan + H2O. It participates in amino-acid biosynthesis; L-tryptophan biosynthesis; L-tryptophan from chorismate: step 5/5. Its function is as follows. The beta subunit is responsible for the synthesis of L-tryptophan from indole and L-serine. This Pseudomonas putida (strain GB-1) protein is Tryptophan synthase beta chain.